The chain runs to 309 residues: Biotin synthase (309 aa).

Residues 35–259 (NKIQISSLLS…MIPKSYIRLS (225 aa)) form the Radical SAM core domain. Residues cysteine 50, cysteine 54, and cysteine 57 each contribute to the [4Fe-4S] cluster site. [2Fe-2S] cluster-binding residues include cysteine 94, cysteine 125, cysteine 185, and arginine 257.

Belongs to the radical SAM superfamily. Biotin synthase family. Homodimer. [4Fe-4S] cluster serves as cofactor. The cofactor is [2Fe-2S] cluster.

It catalyses the reaction (4R,5S)-dethiobiotin + (sulfur carrier)-SH + 2 reduced [2Fe-2S]-[ferredoxin] + 2 S-adenosyl-L-methionine = (sulfur carrier)-H + biotin + 2 5'-deoxyadenosine + 2 L-methionine + 2 oxidized [2Fe-2S]-[ferredoxin]. The protein operates within cofactor biosynthesis; biotin biosynthesis; biotin from 7,8-diaminononanoate: step 2/2. Catalyzes the conversion of dethiobiotin (DTB) to biotin by the insertion of a sulfur atom into dethiobiotin via a radical-based mechanism. This chain is Biotin synthase, found in Rickettsia felis (strain ATCC VR-1525 / URRWXCal2) (Rickettsia azadi).